Consider the following 62-residue polypeptide: MFTMKKTLLVLFFLGVVSLSLCVEERDADEEDGGEVMEEEVKRGALRGCWTKSYPPKPCKGK.

A signal peptide spans 1–22 (MFTMKKTLLVLFFLGVVSLSLC). The propeptide occupies 23-43 (VEERDADEEDGGEVMEEEVKR). A disulfide bond links Cys-49 and Cys-59. Lys-60 is subject to Lysine amide.

Belongs to the frog skin active peptide (FSAP) family. Brevinin subfamily. In terms of tissue distribution, expressed by the skin granular glands.

It localises to the secreted. Functionally, has antibacterial activity against Gram-positive bacteria B.megaterium Bm11, S.lentus and M.luteus, and Gram-negative bacteria E.coli D22, Y.pseudotuberculosis YP III and P.syringae pv tabaci, and antifungal activity against C.albicans ATCC 10231, C.tropicalis, C.guiller-mondii and P.nicotianae spores. Has weak hemolytic activity. The mature peptide inserts into the hydrophobic core of the bacterial cell membrane and increases permeability without disrupting membrane integrity. Probably binds to the outer membrane surface before aggregating to form transmembrane pores. This is Ranacyclin-T (RNCT) from Rana temporaria (European common frog).